The sequence spans 206 residues: Large ribosomal subunit protein uL4 (206 aa).

It belongs to the universal ribosomal protein uL4 family. As to quaternary structure, part of the 50S ribosomal subunit.

Functionally, one of the primary rRNA binding proteins, this protein initially binds near the 5'-end of the 23S rRNA. It is important during the early stages of 50S assembly. It makes multiple contacts with different domains of the 23S rRNA in the assembled 50S subunit and ribosome. In terms of biological role, forms part of the polypeptide exit tunnel. This is Large ribosomal subunit protein uL4 from Rhodopseudomonas palustris (strain ATCC BAA-98 / CGA009).